Here is a 162-residue protein sequence, read N- to C-terminus: Caveolin-2 (162 aa).

The Cytoplasmic segment spans residues 1-86 (MGLETEKTDV…FEISKYVMYK (86 aa)). At Y19 the chain carries Phosphotyrosine; by SRC. Phosphoserine occurs at positions 20 and 23. Residue Y27 is modified to Phosphotyrosine; by SRC. S36 is modified (phosphoserine). Residues 87–107 (FLTVFLAIPLAFLAGILFATL) constitute an intramembrane region (helical). The Cytoplasmic portion of the chain corresponds to 108–162 (SCLHIWIIMPFVKTCLMVLPSVQTIWKSVTDAIVAPLCTSIGRSFSSVSLQLSQD).

This sequence belongs to the caveolin family. As to quaternary structure, monomer or homodimer. Interacts with CAV1; the interaction forms a stable heterooligomeric complex that is required for targeting to lipid rafts and for caveolae formation. Tyrosine phosphorylated forms do not form heterooligomers with the Tyr-19-phosphorylated form existing as a monomer or dimer, and the Tyr-27-form as a monomer only. Interacts (tyrosine phosphorylated form) with the SH2 domain-containing proteins, RASA1, NCK1 and SRC. Interacts (tyrosine phosphorylated form) with INSR, the interaction (Tyr-27-phosphorylated form) is increased on insulin stimulation. Interacts (Tyr-19 phosphorylated form) with MAPK1 (phosphorylated form); the interaction, promoted by insulin, leads to nuclear location and MAPK1 activation. Interacts with STAT3; the interaction is increased on insulin-induced tyrosine phosphorylation leading to STAT activation. Phosphorylated on serine and tyrosine residues. CAV1 promotes phosphorylation on Ser-23 which then targets the complex to the plasma membrane, lipid rafts and caveolae. Phosphorylation on Ser-36 appears to modulate mitosis in endothelial cells. Phosphorylation on both Tyr-19 and Tyr-27 is required for insulin-induced 'Ser-727' phosphorylation of STAT3 and its activation. Phosphorylation on Tyr-19 is required for insulin-induced phosphorylation of MAPK1 and DNA binding of STAT3. Tyrosine phosphorylation is induced by both EGF and insulin (By. similarity).

The protein localises to the nucleus. The protein resides in the cytoplasm. It localises to the golgi apparatus membrane. It is found in the cell membrane. Its subcellular location is the membrane. The protein localises to the caveola. May act as a scaffolding protein within caveolar membranes. Interacts directly with G-protein alpha subunits and can functionally regulate their activity. Acts as an accessory protein in conjunction with CAV1 in targeting to lipid rafts and driving caveolae formation. The Ser-36 phosphorylated form has a role in modulating mitosis in endothelial cells. Positive regulator of cellular mitogenesis of the MAPK signaling pathway. Required for the insulin-stimulated nuclear translocation and activation of MAPK1 and STAT3, and the subsequent regulation of cell cycle progression. The polypeptide is Caveolin-2 (CAV2) (Aotus nancymaae (Ma's night monkey)).